Here is a 371-residue protein sequence, read N- to C-terminus: tRNA N6-adenosine threonylcarbamoyltransferase (371 aa).

Fe cation is bound by residues histidine 110 and histidine 114. Substrate is bound by residues 132–136 (LVSGG), aspartate 165, glycine 178, aspartate 182, and asparagine 289. Residue aspartate 317 participates in Fe cation binding.

This sequence belongs to the KAE1 / TsaD family. It depends on Fe(2+) as a cofactor.

The protein localises to the cytoplasm. It catalyses the reaction L-threonylcarbamoyladenylate + adenosine(37) in tRNA = N(6)-L-threonylcarbamoyladenosine(37) in tRNA + AMP + H(+). Its function is as follows. Required for the formation of a threonylcarbamoyl group on adenosine at position 37 (t(6)A37) in tRNAs that read codons beginning with adenine. Is involved in the transfer of the threonylcarbamoyl moiety of threonylcarbamoyl-AMP (TC-AMP) to the N6 group of A37, together with TsaE and TsaB. TsaD likely plays a direct catalytic role in this reaction. This Solidesulfovibrio magneticus (strain ATCC 700980 / DSM 13731 / RS-1) (Desulfovibrio magneticus) protein is tRNA N6-adenosine threonylcarbamoyltransferase.